The following is a 369-amino-acid chain: DNA polymerase IV 2 (369 aa).

In terms of domain architecture, UmuC spans 17–201 (VFHVDMDSFF…LPVSRIPGVG (185 aa)). 2 residues coordinate Mg(2+): aspartate 21 and aspartate 119. Glutamate 120 is an active-site residue.

It belongs to the DNA polymerase type-Y family. As to quaternary structure, monomer. Mg(2+) serves as cofactor.

Its subcellular location is the cytoplasm. It catalyses the reaction DNA(n) + a 2'-deoxyribonucleoside 5'-triphosphate = DNA(n+1) + diphosphate. Functionally, poorly processive, error-prone DNA polymerase involved in untargeted mutagenesis. Copies undamaged DNA at stalled replication forks, which arise in vivo from mismatched or misaligned primer ends. These misaligned primers can be extended by PolIV. Exhibits no 3'-5' exonuclease (proofreading) activity. May be involved in translesional synthesis. This chain is DNA polymerase IV 2 (dbh2), found in Methanosarcina mazei (strain ATCC BAA-159 / DSM 3647 / Goe1 / Go1 / JCM 11833 / OCM 88) (Methanosarcina frisia).